Consider the following 210-residue polypeptide: GTP pyrophosphokinase YwaC (210 aa).

It belongs to the RelA/SpoT family. Homotetramer.

It carries out the reaction GTP + ATP = guanosine 3'-diphosphate 5'-triphosphate + AMP. Its pathway is purine metabolism; ppGpp biosynthesis; ppGpp from GTP: step 1/2. Functions as a (p)ppGpp synthase; GDP can be used instead of GTP, resulting in an increase of (p)ppGpp synthesis. Overexpression in relA mutants (triple relA-yjbM-ywaC deletions and single relA deletions) leads to growth arrest; GTP levels fall drastically, various guanine-related nucleotides are synthesized (ppGp or pGpp), the cellular transcriptional profile changes dramatically and 70S ribosome dimerization occurs. Overexpression in the presence of a wild-type relA gene does not have these effects. In eubacteria ppGpp (guanosine 3'-diphosphate 5'-diphosphate) is a mediator of the stringent response that coordinates a variety of cellular activities in response to changes in nutritional abundance. activities in response to changes in nutritional abundance. YwaC has probably a minor role in stringent response. The polypeptide is GTP pyrophosphokinase YwaC (ywaC) (Bacillus subtilis (strain 168)).